The following is a 120-amino-acid chain: NAD(P)H-quinone oxidoreductase subunit 3, chloroplastic (120 aa).

The next 3 membrane-spanning stretches (helical) occupy residues 10 to 30 (FLVFLIIACLIPVLALSASKL), 64 to 84 (MFALVFVIFDVETVFLYPWAV), and 89 to 109 (MGFISFLEALVFLSILIVGLV).

It belongs to the complex I subunit 3 family. In terms of assembly, NDH is composed of at least 16 different subunits, 5 of which are encoded in the nucleus.

It is found in the plastid. The protein localises to the chloroplast thylakoid membrane. The catalysed reaction is a plastoquinone + NADH + (n+1) H(+)(in) = a plastoquinol + NAD(+) + n H(+)(out). The enzyme catalyses a plastoquinone + NADPH + (n+1) H(+)(in) = a plastoquinol + NADP(+) + n H(+)(out). NDH shuttles electrons from NAD(P)H:plastoquinone, via FMN and iron-sulfur (Fe-S) centers, to quinones in the photosynthetic chain and possibly in a chloroplast respiratory chain. The immediate electron acceptor for the enzyme in this species is believed to be plastoquinone. Couples the redox reaction to proton translocation, and thus conserves the redox energy in a proton gradient. The protein is NAD(P)H-quinone oxidoreductase subunit 3, chloroplastic of Chlorokybus atmophyticus (Soil alga).